The sequence spans 455 residues: Ribulose bisphosphate carboxylase large chain (455 aa).

Residue Lys-5 is modified to N6,N6,N6-trimethyllysine. The substrate site is built by Asn-114 and Thr-164. Residue Lys-166 is the Proton acceptor of the active site. Lys-168 provides a ligand contact to substrate. Mg(2+)-binding residues include Lys-192, Asp-194, and Glu-195. Residue Lys-192 is modified to N6-carboxylysine. Residue His-285 is the Proton acceptor of the active site. Positions 286, 318, and 370 each coordinate substrate.

This sequence belongs to the RuBisCO large chain family. Type I subfamily. As to quaternary structure, heterohexadecamer of 8 large chains and 8 small chains; disulfide-linked. The disulfide link is formed within the large subunit homodimers. It depends on Mg(2+) as a cofactor. The disulfide bond which can form in the large chain dimeric partners within the hexadecamer appears to be associated with oxidative stress and protein turnover.

Its subcellular location is the plastid. The protein localises to the chloroplast. The enzyme catalyses 2 (2R)-3-phosphoglycerate + 2 H(+) = D-ribulose 1,5-bisphosphate + CO2 + H2O. It carries out the reaction D-ribulose 1,5-bisphosphate + O2 = 2-phosphoglycolate + (2R)-3-phosphoglycerate + 2 H(+). Its function is as follows. RuBisCO catalyzes two reactions: the carboxylation of D-ribulose 1,5-bisphosphate, the primary event in carbon dioxide fixation, as well as the oxidative fragmentation of the pentose substrate in the photorespiration process. Both reactions occur simultaneously and in competition at the same active site. This chain is Ribulose bisphosphate carboxylase large chain, found in Lupinus arcticus (Arctic lupine).